A 147-amino-acid chain; its full sequence is uncharacterized protein (147 aa).

4 consecutive transmembrane segments (helical) span residues 13–33, 45–65, 80–100, and 116–136; these read LSLV…IIGL, LFVG…AYFL, YLFT…LILI, and WGFF…IIPY.

It is found in the cell membrane. This is an uncharacterized protein from Methanocaldococcus jannaschii (strain ATCC 43067 / DSM 2661 / JAL-1 / JCM 10045 / NBRC 100440) (Methanococcus jannaschii).